We begin with the raw amino-acid sequence, 195 residues long: Thymidine kinase (195 aa).

ATP is bound by residues 15-22 and 91-94; these read GSMFSGKT and DEAN. The Proton acceptor role is filled by Glu-92. The Zn(2+) site is built by Cys-148, Cys-151, Cys-186, and Cys-189.

This sequence belongs to the thymidine kinase family. As to quaternary structure, homotetramer.

Its subcellular location is the cytoplasm. It catalyses the reaction thymidine + ATP = dTMP + ADP + H(+). This chain is Thymidine kinase, found in Halobacterium salinarum (strain ATCC 29341 / DSM 671 / R1).